Reading from the N-terminus, the 308-residue chain is Porphobilinogen deaminase (308 aa).

C240 carries the S-(dipyrrolylmethanemethyl)cysteine modification.

It belongs to the HMBS family. Monomer. Requires dipyrromethane as cofactor.

The enzyme catalyses 4 porphobilinogen + H2O = hydroxymethylbilane + 4 NH4(+). It participates in porphyrin-containing compound metabolism; protoporphyrin-IX biosynthesis; coproporphyrinogen-III from 5-aminolevulinate: step 2/4. Tetrapolymerization of the monopyrrole PBG into the hydroxymethylbilane pre-uroporphyrinogen in several discrete steps. The protein is Porphobilinogen deaminase of Laribacter hongkongensis (strain HLHK9).